Here is a 96-residue protein sequence, read N- to C-terminus: Large ribosomal subunit protein eL14 (96 aa).

Belongs to the eukaryotic ribosomal protein eL14 family.

The chain is Large ribosomal subunit protein eL14 from Desulfurococcus amylolyticus (strain DSM 18924 / JCM 16383 / VKM B-2413 / 1221n) (Desulfurococcus kamchatkensis).